Reading from the N-terminus, the 159-residue chain is Phosphopantetheine adenylyltransferase (159 aa).

Threonine 10 serves as a coordination point for substrate. Residues 10–11 (TF) and histidine 18 contribute to the ATP site. Positions 42, 74, and 88 each coordinate substrate. ATP is bound by residues 89–91 (GLR), glutamate 99, and 124–130 (WSFISSS).

Belongs to the bacterial CoaD family. Homohexamer. It depends on Mg(2+) as a cofactor.

The protein resides in the cytoplasm. The enzyme catalyses (R)-4'-phosphopantetheine + ATP + H(+) = 3'-dephospho-CoA + diphosphate. It functions in the pathway cofactor biosynthesis; coenzyme A biosynthesis; CoA from (R)-pantothenate: step 4/5. Functionally, reversibly transfers an adenylyl group from ATP to 4'-phosphopantetheine, yielding dephospho-CoA (dPCoA) and pyrophosphate. This is Phosphopantetheine adenylyltransferase from Escherichia coli (strain SMS-3-5 / SECEC).